The chain runs to 388 residues: Arginine biosynthesis bifunctional protein ArgJ 2 (388 aa).

The substrate site is built by T145, K167, T178, E257, and N381. Residue T178 is the Nucleophile of the active site.

This sequence belongs to the ArgJ family. Heterotetramer of two alpha and two beta chains.

It localises to the cytoplasm. It carries out the reaction N(2)-acetyl-L-ornithine + L-glutamate = N-acetyl-L-glutamate + L-ornithine. It catalyses the reaction L-glutamate + acetyl-CoA = N-acetyl-L-glutamate + CoA + H(+). Its pathway is amino-acid biosynthesis; L-arginine biosynthesis; L-ornithine and N-acetyl-L-glutamate from L-glutamate and N(2)-acetyl-L-ornithine (cyclic): step 1/1. It functions in the pathway amino-acid biosynthesis; L-arginine biosynthesis; N(2)-acetyl-L-ornithine from L-glutamate: step 1/4. Catalyzes two activities which are involved in the cyclic version of arginine biosynthesis: the synthesis of N-acetylglutamate from glutamate and acetyl-CoA as the acetyl donor, and of ornithine by transacetylation between N(2)-acetylornithine and glutamate. The sequence is that of Arginine biosynthesis bifunctional protein ArgJ 2 from Clostridium acetobutylicum (strain ATCC 824 / DSM 792 / JCM 1419 / IAM 19013 / LMG 5710 / NBRC 13948 / NRRL B-527 / VKM B-1787 / 2291 / W).